A 70-amino-acid chain; its full sequence is U2-agatoxin-Ao1r (70 aa).

An N-terminal signal peptide occupies residues Met1 to Pro20. Residues Val21–Arg34 constitute a propeptide that is removed on maturation. Intrachain disulfides connect Cys37/Cys53, Cys44/Cys58, and Cys52/Cys68. Leu69 carries the post-translational modification Leucine amide.

It belongs to the neurotoxin 01 (U2-agtx) family. As to expression, expressed by the venom gland.

It localises to the secreted. Functionally, insect active toxin causing rapid but reversible paralysis in crickets. No activity shown in mammals. Does not show effect on mammalian voltage-gated calcium channels. The polypeptide is U2-agatoxin-Ao1r (Agelena orientalis (Funnel-web spider)).